The chain runs to 574 residues: Uric acid-xanthine permease (574 aa).

Residues 1–20 (MDNSIHSTDGPDSVIPNSNP) form a disordered region. Transmembrane regions (helical) follow at residues 77-97 (LLAF…VVTP), 111-131 (LQQY…MVQI), 141-161 (YYIG…ISVA), 188-209 (AYGA…LAFV), 217-237 (IFPP…LIGT), 264-284 (LPWG…SIIL), 296-315 (CSVV…CGYF), 338-361 (VYGP…IGDV), 427-447 (CCLI…IVAI), 451-471 (VMGG…QAIV), 482-502 (FILT…TWFG), and 522-542 (LVLE…NAIM). Residues 555–574 (MPVSAHDNRDGEAEYQSKQA) are disordered. Residue Lys-572 forms a Glycyl lysine isopeptide (Lys-Gly) (interchain with G-Cter in ubiquitin) linkage.

This sequence belongs to the nucleobase:cation symporter-2 (NCS2) (TC 2.A.40) family. In terms of processing, ubiquitinated by hulA. Ubiquitination leads to internalization, sorting into the endosomal pathway to the vacuolar lumen where uapA is eventually degraded.

The protein localises to the cell membrane. In terms of biological role, uric acid-xanthine transporter. This chain is Uric acid-xanthine permease (uapA), found in Emericella nidulans (strain FGSC A4 / ATCC 38163 / CBS 112.46 / NRRL 194 / M139) (Aspergillus nidulans).